Here is a 138-residue protein sequence, read N- to C-terminus: Protein SchB (138 aa).

A Cupin type-2 domain is found at 42–108 (VAVVRPGERI…NTGDVEARLV (67 aa)). Residues 118-138 (PDLGHVDTEETDETAPAGVVS) form a disordered region.

The protein belongs to the SchB/CurC family.

The protein is Protein SchB (schB) of Streptomyces halstedii.